A 269-amino-acid polypeptide reads, in one-letter code: dITP/XTP pyrophosphatase (269 aa).

22-27 contributes to the substrate binding site; sequence SNNAHK. Asp82 serves as the catalytic Proton acceptor. A Mg(2+)-binding site is contributed by Asp82. Residues Ser83, 165–168, Lys188, and 193–194 contribute to the substrate site; these read FGYD and HR.

This sequence belongs to the HAM1 NTPase family. Homodimer. It depends on Mg(2+) as a cofactor.

The enzyme catalyses XTP + H2O = XMP + diphosphate + H(+). The catalysed reaction is dITP + H2O = dIMP + diphosphate + H(+). It carries out the reaction ITP + H2O = IMP + diphosphate + H(+). In terms of biological role, pyrophosphatase that catalyzes the hydrolysis of nucleoside triphosphates to their monophosphate derivatives, with a high preference for the non-canonical purine nucleotides XTP (xanthosine triphosphate), dITP (deoxyinosine triphosphate) and ITP. Seems to function as a house-cleaning enzyme that removes non-canonical purine nucleotides from the nucleotide pool, thus preventing their incorporation into DNA/RNA and avoiding chromosomal lesions. This chain is dITP/XTP pyrophosphatase, found in Treponema pallidum (strain Nichols).